Reading from the N-terminus, the 913-residue chain is Striatin-interacting protein homolog (913 aa).

Low complexity-rich tracts occupy residues 177-188, 195-204, and 791-811; these read QQQQQQQQNENE, TNFTTTTTTT, and NNNN…NNDN. Disordered stretches follow at residues 177–204 and 791–814; these read QQQQ…TTTT and NNNN…NGLT.

This sequence belongs to the STRIP family.

The polypeptide is Striatin-interacting protein homolog (fam40) (Dictyostelium discoideum (Social amoeba)).